The sequence spans 149 residues: MFSPQSRLRHAVADTFAMVVYCSVVNMLIEIFLSGMSVEQSLSSRLVAIPVNILIAWPYGVYRDLIMRVARKASPAGWAKNLADVLAYVTFQSPVYIIILLTVGADWHQIMAAVSSNIVVSMLMGAVYGYFLDYCRRLFKVSNYHQAKA.

4 helical membrane passes run phenylalanine 16–methionine 36, leucine 46–isoleucine 66, valine 85–alanine 105, and alanine 112–leucine 132.

The protein belongs to the AlaE exporter family.

Its subcellular location is the cell inner membrane. Functionally, exports L-alanine. The protein is L-alanine exporter AlaE of Salmonella arizonae (strain ATCC BAA-731 / CDC346-86 / RSK2980).